Reading from the N-terminus, the 428-residue chain is MLRNLFRRRLFSCPTKYYFMLLVLSLITFSVLRIHQKPEFFSVRHLELAGDDPYSNVNCTKILQGDPEEIQKVKLEILTVQFKKRPRRTPHDYINMTRDCASFIRTRKYIVEPLTKEEVGFPIAYSIVVHHKIEMLDRLLRAIYMPQNFYCIHVDRKAEESFLAAVQGIASCFDNVFVASQLESVVYASWSRVKADLNCMKDLYRMNANWKYLINLCGMDFPIKTNLEIVRKLKCSTGENNLETEKMPPNKEERWKKRYTVVDGKLTNTGIVKAPPPLKTPLFSGSAYFVVTREYVGYVLENENIQKLMEWAQDTYSPDEFLWATIQRIPEVPGSFPSSNKYDLSDMNAIARFVKWQYFEGHVSNGAPYPPCSGVHVRSVCVFGAGDLSWMLRQHHLFANKFDMDVDPFAIQCLDEHLRHKALENLEH.

Residues 1–9 (MLRNLFRRR) lie on the Cytoplasmic side of the membrane. The tract at residues 5–9 (LFRRR) is mediates interaction with GOLPH3 and is necessary and sufficient for localization to the Golgi. A helical; Signal-anchor for type II membrane protein membrane pass occupies residues 10–32 (LFSCPTKYYFMLLVLSLITFSVL). Residues 33 to 121 (RIHQKPEFFS…EPLTKEEVGF (89 aa)) form a stem region region. The Lumenal segment spans residues 33–428 (RIHQKPEFFS…RHKALENLEH (396 aa)). 2 N-linked (GlcNAc...) asparagine glycosylation sites follow: N58 and N95. 4 cysteine pairs are disulfide-bonded: C59/C413, C100/C172, C151/C199, and C372/C381. The interval 122-428 (PIAYSIVVHH…RHKALENLEH (307 aa)) is catalytic. UDP-N-acetyl-alpha-D-glucosamine is bound by residues 128-130 (VVH), 155-157 (DRK), and Y187. Residues E243, N250, K251, R254, E320, K341, and Y358 each coordinate a glycoprotein. E320 (nucleophile) is an active-site residue. UDP-N-acetyl-alpha-D-glucosamine is bound by residues R378 and K401.

It belongs to the glycosyltransferase 14 family. In terms of assembly, interacts with GOLPH3; may control GCNT1 retention in the Golgi. N-glycosylated. Expressed in kidney, liver, stomach, spleen, lung and brain.

It is found in the golgi apparatus membrane. It catalyses the reaction a 3-O-[beta-D-galactosyl-(1-&gt;3)-N-acetyl-alpha-D-galactosaminyl]-L-seryl-[protein] + UDP-N-acetyl-alpha-D-glucosamine = 3-O-{beta-D-galactosyl-(1-&gt;3)-[N-acetyl-beta-D-glucosaminyl-(1-&gt;6)]-N-acetyl-alpha-D-galactosaminyl}-L-seryl-[protein] + UDP + H(+). The enzyme catalyses a 3-O-[beta-D-galactosyl-(1-&gt;3)-N-acetyl-alpha-D-galactosaminyl]-L-threonyl-[protein] + UDP-N-acetyl-alpha-D-glucosamine = a 3-O-{beta-D-galactosyl-(1-&gt;3)-[N-acetyl-beta-D-glucosaminyl-(1-&gt;6)]-N-acetyl-alpha-D-galactosaminyl}-L-threonyl-[protein] + UDP + H(+). The catalysed reaction is a globoside GalGb4Cer + UDP-N-acetyl-alpha-D-glucosamine = a globoside GlcNAc-(beta1-&gt;6)-GalGb4Cer + UDP + H(+). It carries out the reaction a ganglioside GA1 + UDP-N-acetyl-alpha-D-glucosamine = a ganglioside beta-D-GlcNAc-(1-&gt;6)-GA1 + UDP + H(+). The protein operates within protein modification; protein glycosylation. Its pathway is glycolipid biosynthesis. With respect to regulation, inactivated by thiol-reactive agents. Inhibited by free UDP. In terms of biological role, glycosyltransferase that catalyzes the transfer of an N-acetylglucosamine (GlcNAc) moiety in beta1-6 linkage from UDP-GlcNAc onto mucin-type core 1 O-glycan to form the branched mucin-type core 2 O-glycan. The catalysis is metal ion-independent and occurs with inversion of the anomeric configuration of sugar donor. Selectively involved in synthesis of mucin-type core 2 O-glycans that serve as scaffolds for the display of selectin ligand sialyl Lewis X epitope by myeloid cells, with an impact on homeostasis and recruitment to inflammatory sites. Can also act on glycolipid substrates. Transfers GlcNAc moiety to GalGb4Cer globosides in a reaction step to the synthesis of stage-specific embryonic antigen 1 (SSEA-1) determinant. Can use Galbeta1-3GalNAcalpha1-R and Galbeta1-3GalNAcbeta1-R oligosaccharide derivatives as acceptor substrates. This Mus musculus (Mouse) protein is Beta-1,3-galactosyl-O-glycosyl-glycoprotein beta-1,6-N-acetylglucosaminyltransferase (Gcnt1).